The following is a 299-amino-acid chain: ATP phosphoribosyltransferase (299 aa).

This sequence belongs to the ATP phosphoribosyltransferase family. Long subfamily. In terms of assembly, equilibrium between an active dimeric form, an inactive hexameric form and higher aggregates. Interconversion between the various forms is largely reversible and is influenced by the natural substrates and inhibitors of the enzyme. Mg(2+) serves as cofactor.

Its subcellular location is the cytoplasm. The enzyme catalyses 1-(5-phospho-beta-D-ribosyl)-ATP + diphosphate = 5-phospho-alpha-D-ribose 1-diphosphate + ATP. It participates in amino-acid biosynthesis; L-histidine biosynthesis; L-histidine from 5-phospho-alpha-D-ribose 1-diphosphate: step 1/9. Feedback inhibited by histidine. Its function is as follows. Catalyzes the condensation of ATP and 5-phosphoribose 1-diphosphate to form N'-(5'-phosphoribosyl)-ATP (PR-ATP). Has a crucial role in the pathway because the rate of histidine biosynthesis seems to be controlled primarily by regulation of HisG enzymatic activity. The polypeptide is ATP phosphoribosyltransferase (Escherichia fergusonii (strain ATCC 35469 / DSM 13698 / CCUG 18766 / IAM 14443 / JCM 21226 / LMG 7866 / NBRC 102419 / NCTC 12128 / CDC 0568-73)).